The primary structure comprises 128 residues: MRPPADPGARRRATHGRGLSAEGLALLVLMLKGYRPLARRFAAAGGEIDLIVRRGRTIAFVEVKARATLDAAATAIDARKRARVSRAARAWLARHPLAAGATLRADAVFVAPRRWPRHLPNAFEIEGL.

It belongs to the UPF0102 family.

This is UPF0102 protein Mext_0406 from Methylorubrum extorquens (strain PA1) (Methylobacterium extorquens).